The sequence spans 965 residues: Phosphoenolpyruvate carboxylase 1 (965 aa).

Ser11 is modified (phosphoserine). The active site involves His172. Trp283, Arg450, and Asp597 together coordinate D-glucose 6-phosphate. The active site involves Lys600. Arg635 contacts D-glucose 6-phosphate. Arg641 is a catalytic residue. Position 641 (Arg641) interacts with L-aspartate. Thr665 is a D-glucose 6-phosphate binding site. Position 673 (Gln673) interacts with L-aspartate. Residues Arg753 and 767-769 (RAI) each bind D-glucose 6-phosphate. L-aspartate-binding residues include Lys829, Arg888, and Asn963.

It belongs to the PEPCase type 1 family. Homotetramer. Mg(2+) serves as cofactor. In terms of tissue distribution, expressed in roots and stems and at low levels in leaves. Preferentially expressed in the phloem and in root tips.

It localises to the cytoplasm. The enzyme catalyses oxaloacetate + phosphate = phosphoenolpyruvate + hydrogencarbonate. With respect to regulation, activated by the allosteric regulator glucose-6-phosphate. Inhibited by malate and aspartate. Up regulated by light-reversible phosphorylation. Through the carboxylation of phosphoenolpyruvate (PEP) it forms oxaloacetate, a four-carbon dicarboxylic acid source for the tricarboxylic acid cycle. May be involved in phloem loading with sucrose and in anions and cations uptake and amino acid biosynthesis in roots. This Flaveria trinervia (Clustered yellowtops) protein is Phosphoenolpyruvate carboxylase 1.